The sequence spans 527 residues: V(D)J recombination-activating protein 2 (527 aa).

The disordered stretch occupies residues 359 to 380 (QKIVSNSQTSTEDPGDSTPFED). Residues 361-370 (IVSNSQTSTE) show a composition bias toward polar residues. The segment covering 371 to 380 (DPGDSTPFED) has biased composition (acidic residues). A PHD-type; atypical zinc finger spans residues 416 to 484 (WITCCPTCDV…KYYCNEHVQI (69 aa)). 8 residues coordinate Zn(2+): Cys-419, Cys-423, Cys-446, His-452, His-455, Cys-458, Cys-478, and His-481. The interval 490–511 (TPKRNPPLQKPPMKSLHKKGSG) is disordered.

Belongs to the RAG2 family. Component of the RAG complex composed of core components RAG1 and RAG2, and associated component HMGB1 or HMGB2. Maturing lymphoid cells.

The protein resides in the nucleus. Its function is as follows. Core component of the RAG complex, a multiprotein complex that mediates the DNA cleavage phase during V(D)J recombination. V(D)J recombination assembles a diverse repertoire of immunoglobulin and T-cell receptor genes in developing B and T-lymphocytes through rearrangement of different V (variable), in some cases D (diversity), and J (joining) gene segments. DNA cleavage by the RAG complex occurs in 2 steps: a first nick is introduced in the top strand immediately upstream of the heptamer, generating a 3'-hydroxyl group that can attack the phosphodiester bond on the opposite strand in a direct transesterification reaction, thereby creating 4 DNA ends: 2 hairpin coding ends and 2 blunt, 5'-phosphorylated ends. The chromatin structure plays an essential role in the V(D)J recombination reactions and the presence of histone H3 trimethylated at 'Lys-4' (H3K4me3) stimulates both the nicking and haipinning steps. The RAG complex also plays a role in pre-B cell allelic exclusion, a process leading to expression of a single immunoglobulin heavy chain allele to enforce clonality and monospecific recognition by the B-cell antigen receptor (BCR) expressed on individual B-lymphocytes. The introduction of DNA breaks by the RAG complex on one immunoglobulin allele induces ATM-dependent repositioning of the other allele to pericentromeric heterochromatin, preventing accessibility to the RAG complex and recombination of the second allele. In the RAG complex, RAG2 is not the catalytic component but is required for all known catalytic activities mediated by RAG1. It probably acts as a sensor of chromatin state that recruits the RAG complex to H3K4me3. This Mus musculus (Mouse) protein is V(D)J recombination-activating protein 2 (Rag2).